Here is a 369-residue protein sequence, read N- to C-terminus: 3',5'-cyclic-nucleotide phosphodiesterase 1 (369 aa).

It belongs to the cyclic nucleotide phosphodiesterase class-II family.

It carries out the reaction a nucleoside 3',5'-cyclic phosphate + H2O = a nucleoside 5'-phosphate + H(+). In terms of biological role, controls the level of cAMP in yeast cells, together with the high-affinity cAMP phosphodiesterase (PDE2). The protein is 3',5'-cyclic-nucleotide phosphodiesterase 1 (PDE1) of Saccharomyces cerevisiae (strain ATCC 204508 / S288c) (Baker's yeast).